The following is a 154-amino-acid chain: Small ribosomal subunit protein bS6 (154 aa).

A disordered region spans residues 94–154 (VKQEGPLPTP…SSQGKESQKS (61 aa)). A compositionally biased stretch (polar residues) spans 103–112 (PRSSNKGYNQ). Basic and acidic residues predominate over residues 113–139 (SEKKDIESIDSTNKSEFKEEANDKKTA). Over residues 140 to 154 (TSESTSSQGKESQKS) the composition is skewed to polar residues.

It belongs to the bacterial ribosomal protein bS6 family.

Binds together with bS18 to 16S ribosomal RNA. The protein is Small ribosomal subunit protein bS6 of Prochlorococcus marinus subsp. pastoris (strain CCMP1986 / NIES-2087 / MED4).